The following is a 397-amino-acid chain: Acetate kinase (397 aa).

N7 contacts Mg(2+). K14 serves as a coordination point for ATP. A substrate-binding site is contributed by R91. D148 serves as the catalytic Proton donor/acceptor. ATP is bound by residues 208–212 (HIGNG), 283–285 (DMR), and 331–335 (GVGEN). E384 provides a ligand contact to Mg(2+).

It belongs to the acetokinase family. As to quaternary structure, homodimer. Mg(2+) is required as a cofactor. Requires Mn(2+) as cofactor.

The protein localises to the cytoplasm. It catalyses the reaction acetate + ATP = acetyl phosphate + ADP. Its pathway is metabolic intermediate biosynthesis; acetyl-CoA biosynthesis; acetyl-CoA from acetate: step 1/2. Catalyzes the formation of acetyl phosphate from acetate and ATP. Can also catalyze the reverse reaction. This is Acetate kinase from Azobacteroides pseudotrichonymphae genomovar. CFP2.